The chain runs to 1032 residues: MSFRQKRTRIPLLAMTVTALAAAVCGVTTAPAATGAEVAVPLSVGAAAGNATPIPGYVIQSSAQVSDDSAVSKPGFPTSGWYPVSSRSTVYAGLLQNGKYADPFYSTNMQNVPAAQFSVPWWYRTDLNVDDTSSRTYLDFSGVLSKADVWVNGTKVATKDQVNGAYTRHDLDITAQVHTGVNSVAFKVYPNDPNRDLSMGWIDWAQTPPDQNMGIVRDVLVRRSGAVALRSAHVIQKLNSALDHADLTVKADVRNDSANAVQTTVAGTVAGKPISQTVSLAAKERKTVTFPLVGLDRPNVWWPAGMGGQHRYDLDLTASVGGTPSDAAKSKFGVRDVKATLNSSGGRQYSVNGKPLLIRGGGYTPDLFLRWNETAAADKLKYVLNLGLNTVRLEGHIEPDEFFDIADDLGVLTMPGWECCDKWEGQVNGEEKGEPWVESDYPIAKASMFSEAERLRDHPSVISFHIGSDFAPDRRIEQGYLDAMKAADFLLPVIPAASARPSPITGASGMKMNGPYDYVPPVYWYDKSQKDRGGAWSFNSETSAGVDIPTMDTLKRMMSASELDTMWKNPSAKQYHRSSSDTFGNLKLFGDALTKRYGASANLNDFVRKAQLSQYENVRAEFESHSRNYTDSTNPSTGLIYWMLNSPWTSLHWQLFDAYMDQNGAYYGAKKANEPLHIQYSHDNRSVVVINQTSNAVSGLTATTKLYNLDGTEKYSNTKTGLSVGALGAKATAVTVPAVSGLSTTYLAKWVLTDSSGKEVSRNVYWLSTKADTLNWGGSDWYYTPQSAFADLSGLNNLGQSAVGATANSVAGADGTTTTTVTLKNTSGGRLPAFYVDSKVVDSAGKPVLPVEWNDNAVSLWPGETTTLTAKYRTADLKGSKPSVRISGWNTGTQTVPADGSGPGPSDPVDYQAEDATIVQGAVESNHAGYTGTGFVNYDNVAGSSVEWTVTVPSAGTYDVVVRYANGTTTSRPLDFSVNGSISASGVAFGSTGTWPAWTTKTVRVTLAAGVNKIKAVATTANGGPNVDKITL.

The first 32 residues, Met-1–Ala-32, serve as a signal peptide directing secretion. Positions Ala-33–Ala-46 are excised as a propeptide. Asp-469 serves as the catalytic Proton donor. Glu-541 acts as the Nucleophile in catalysis. The segment at Ser-883–Pro-908 is disordered. The 124-residue stretch at Val-909–Leu-1032 folds into the CBM6 domain.

Belongs to the glycosyl hydrolase 2 family. As to quaternary structure, monomer.

The protein localises to the secreted. It catalyses the reaction Hydrolysis of chitosan or chitosan oligosaccharides to remove successive D-glucosamine residues from the non-reducing termini.. Its function is as follows. Hydrolyzes chitosan and chitooligosaccharides with retention of anomeric configuration. Has maximum activity on chitotetraose, chitopentaose and their corresponding alcohols, with a slight decrease in the rate of hydrolysis on longer chains. Has no activity against beta-D-glucopyranoside, beta-D-xylopyranoside, beta-D-mannoside, beta-D-glucuronide, beta-D-galactoside, beta-D-N-acetylgalactosamide, beta-D-N-acetylglucosaminide and alpha-D-N-acetylglucosaminide. The chain is Exo-beta-D-glucosaminidase from Amycolatopsis orientalis (Nocardia orientalis).